The primary structure comprises 209 residues: NAD(P)H dehydrogenase (quinone) (209 aa).

In terms of domain architecture, Flavodoxin-like spans 4 to 199 (VNIIFHSVHA…EMARYQGRHV (196 aa)). FMN contacts are provided by residues 10–15 (SVHAHI) and 87–89 (TRY). A substrate-binding site is contributed by W107. Residues 122 to 128 (SSGTQHG) and H143 each bind FMN.

The protein belongs to the WrbA family. The cofactor is FMN.

It carries out the reaction a quinone + NADH + H(+) = a quinol + NAD(+). The catalysed reaction is a quinone + NADPH + H(+) = a quinol + NADP(+). The sequence is that of NAD(P)H dehydrogenase (quinone) from Methanosarcina mazei (strain ATCC BAA-159 / DSM 3647 / Goe1 / Go1 / JCM 11833 / OCM 88) (Methanosarcina frisia).